Reading from the N-terminus, the 333-residue chain is Meiotic recombination protein rec24 (333 aa).

Belongs to the MEI4L family. In terms of assembly, interacts with Rec7, as part of the meiotic recombination initiation complex.

It is found in the cytoplasm. The protein resides in the nucleus. Functionally, required for correct meiotic chromosome segregation and recombination. Accessory protein required for Rec12 activity, which is involved in formation of the double-strand breaks (DSBs) that initiate meiotic recombination. The polypeptide is Meiotic recombination protein rec24 (rec24) (Schizosaccharomyces pombe (strain 972 / ATCC 24843) (Fission yeast)).